Reading from the N-terminus, the 67-residue chain is ATP synthase F(0) complex subunit 8 (67 aa).

The chain crosses the membrane as a helical span at residues 8–24; the sequence is TWFITITSMIMTLFILF. At lysine 54 the chain carries N6-acetyllysine; alternate. At lysine 54 the chain carries N6-succinyllysine; alternate. The residue at position 57 (lysine 57) is an N6-acetyllysine.

Belongs to the ATPase protein 8 family. In terms of assembly, component of the ATP synthase complex composed at least of ATP5F1A/subunit alpha, ATP5F1B/subunit beta, ATP5MC1/subunit c (homooctomer), MT-ATP6/subunit a, MT-ATP8/subunit 8, ATP5ME/subunit e, ATP5MF/subunit f, ATP5MG/subunit g, ATP5MK/subunit k, ATP5MJ/subunit j, ATP5F1C/subunit gamma, ATP5F1D/subunit delta, ATP5F1E/subunit epsilon, ATP5PF/subunit F6, ATP5PB/subunit b, ATP5PD/subunit d, ATP5PO/subunit OSCP. ATP synthase complex consists of a soluble F(1) head domain (subunits alpha(3) and beta(3)) - the catalytic core - and a membrane F(0) domain - the membrane proton channel (subunits c, a, 8, e, f, g, k and j). These two domains are linked by a central stalk (subunits gamma, delta, and epsilon) rotating inside the F1 region and a stationary peripheral stalk (subunits F6, b, d, and OSCP). Interacts with PRICKLE3.

Its subcellular location is the mitochondrion membrane. In terms of biological role, subunit 8, of the mitochondrial membrane ATP synthase complex (F(1)F(0) ATP synthase or Complex V) that produces ATP from ADP in the presence of a proton gradient across the membrane which is generated by electron transport complexes of the respiratory chain. ATP synthase complex consist of a soluble F(1) head domain - the catalytic core - and a membrane F(1) domain - the membrane proton channel. These two domains are linked by a central stalk rotating inside the F(1) region and a stationary peripheral stalk. During catalysis, ATP synthesis in the catalytic domain of F(1) is coupled via a rotary mechanism of the central stalk subunits to proton translocation. In vivo, can only synthesize ATP although its ATP hydrolase activity can be activated artificially in vitro. Part of the complex F(0) domain. The sequence is that of ATP synthase F(0) complex subunit 8 from Sus scrofa (Pig).